The sequence spans 710 residues: F-box only protein 40 (710 aa).

Residues 53 to 114 (EHTLLCPLEQ…VDSETFLHEN (62 aa)) form a TRAF-type zinc finger. Disordered regions lie at residues 152 to 174 (DATE…GAVG) and 234 to 279 (GSLG…SQEL). Over residues 238 to 248 (KSEDKNGDVAG) the composition is skewed to basic and acidic residues. The F-box domain occupies 572 to 626 (LNSLTSLPLEVLQYIAGFLDSISLSQLSQVSVLMRNICATLLQERGMVLSQWKKK).

Directly interacts with SKP1 and CUL1. In terms of tissue distribution, expressed only in heart and skeletal muscle.

The protein resides in the cytoplasm. In terms of biological role, probable substrate-recognition component of the SCF (SKP1-CUL1-F-box protein)-type E3 ubiquitin ligase complex that may function in myogenesis. The sequence is that of F-box only protein 40 (Fbxo40) from Mus musculus (Mouse).